Consider the following 755-residue polypeptide: Polycomb protein SUZ12 (755 aa).

Disordered regions lie at residues 26–79 (KMGN…RRIS), 333–377 (NANG…SRRA), and 392–420 (AVGR…SDDR). Over residues 30-42 (KASSQAQKRSQSQ) the composition is skewed to low complexity. 2 stretches are compositionally biased toward polar residues: residues 43–57 (TGDS…DGSG) and 349–359 (TQPNGTHNEGT). Over residues 411–420 (GEDHPPSDDR) the composition is skewed to basic and acidic residues. Residues 436–458 (FACLICGAENERLSQLRAHYMCH) form a C2H2-type zinc finger. Positions 580–645 (IDDSWLLLKH…KADWLVSKRS (66 aa)) are polycomb protein VEFS-Box.

The protein belongs to the VEFS (VRN2-EMF2-FIS2-SU(Z)12) family. In terms of assembly, component of the polycomb repressive complex 2 (PRC2) that consists of four core subunits icluding EZH2, EED, SUZ12, and RBBP4, among which EZH2 is the catalytic subunit and which minimally requires EED and SUZ12 for catalysis.

It localises to the nucleus. Its function is as follows. Component of the of the Polycomb Repressive Complex 2 (PRC2), a histone H3 lysine methyltransferase responsible for generating mono-, di-, and tri-methylation on Lys27 (H3K27me1, H3K27me2 and H3K27me3). The tri-methylated form is known to be critical in gene repression, and its proper placement is essential in defining repression patterns during development. SUZ12 is not a catalytic subunit but is required for the complex regulation of histone H3 lysine methylation by EZH2. This chain is Polycomb protein SUZ12, found in Chaetomium thermophilum (strain DSM 1495 / CBS 144.50 / IMI 039719) (Thermochaetoides thermophila).